The chain runs to 121 residues: Small ribosomal subunit protein uS12 (121 aa).

A disordered region spans residues 1 to 25; the sequence is MPTINQLVRKNRKQKKSQSKSPVLE. Residues 9 to 18 show a composition bias toward basic residues; the sequence is RKNRKQKKSQ. A 3-methylthioaspartic acid modification is found at aspartate 89.

This sequence belongs to the universal ribosomal protein uS12 family. As to quaternary structure, part of the 30S ribosomal subunit. Contacts proteins S8 and S17. May interact with IF1 in the 30S initiation complex.

With S4 and S5 plays an important role in translational accuracy. Its function is as follows. Interacts with and stabilizes bases of the 16S rRNA that are involved in tRNA selection in the A site and with the mRNA backbone. Located at the interface of the 30S and 50S subunits, it traverses the body of the 30S subunit contacting proteins on the other side and probably holding the rRNA structure together. The combined cluster of proteins S8, S12 and S17 appears to hold together the shoulder and platform of the 30S subunit. The sequence is that of Small ribosomal subunit protein uS12 from Rhodopirellula baltica (strain DSM 10527 / NCIMB 13988 / SH1).